Consider the following 415-residue polypeptide: Arrestin domain-containing protein 4 (415 aa).

2 short sequence motifs (PPxY motif) span residues 347-350 and 392-395; these read PPNY and PPLY.

It belongs to the arrestin family. In terms of assembly, interacts with ADRB2. Interacts (via PPxY motifs) with ITCH, NEDD4L and WWP2. Interacts with AVPR2. Identified in a complex containing at least ARRDC4, AVPR2 and HGS. Interacts with SLC11A2; controls the incorporation of SLC11A2 into extracellular vesicles through an ubiquitination-dependent mechanism. Interacts with TRIM65.

The protein localises to the early endosome. The protein resides in the cell membrane. Its subcellular location is the cytoplasmic vesicle. Its function is as follows. Functions as an adapter recruiting ubiquitin-protein ligases to their specific substrates. Plays a role in endocytosis of activated G protein-coupled receptors (GPCRs). Through an ubiquitination-dependent mechanism also plays a role in the incorporation of SLC11A2 into extracellular vesicles. May play a role in glucose uptake. Participates in innate immune response by promoting IFIH1/MDA5 activation through interaction with TRIM65. The sequence is that of Arrestin domain-containing protein 4 from Mus musculus (Mouse).